An 88-amino-acid polypeptide reads, in one-letter code: Meiosis-expressed gene 1 protein (88 aa).

It belongs to the MEIG1 family. As to quaternary structure, interacts with PACRG. Interacts with MORN3. Expressed in the testes (at protein level). Expressed in the ovary. Several isoforms have been identified differing in their 5'-untranslated exons. These isoforms show different tissue expression. Some are expressed in various tissues, including lung, liver, brain, testis, oviduct and oocytes. Some are testis-specific.

Essential for spermiogenesis. The polypeptide is Meiosis-expressed gene 1 protein (Mus musculus (Mouse)).